The sequence spans 462 residues: Runt-related transcription factor 1 (462 aa).

The tract at residues 1-27 is disordered; that stretch reads MRIPVDTSTSRRFTPPSTTLSPGKMSE. The segment covering 7-22 has biased composition (low complexity); that stretch reads TSTSRRFTPPSTTLSP. One can recognise a Runt domain in the interval 50–178; it reads NMVEVLSDHP…TVDGPREPRR (129 aa). The tract at residues 80–84 is interaction with DNA; that stretch reads RCNKT. The chloride site is built by Asn112, Glu116, Arg139, and Val170. Interaction with DNA stretches follow at residues 135–143 and 168–177; these read RFVGRSGRG and ITVDGPREPR. Positions 399–462 are disordered; it reads MMSGGERSPP…RLEEAVWRPY (64 aa). 2 stretches are compositionally biased toward polar residues: residues 415–433 and 440–450; these read TNASTGSTLLNPNLPNQSD and SHSNSPTNMGS. Basic and acidic residues predominate over residues 453 to 462; sequence RLEEAVWRPY.

As to quaternary structure, heterodimer with cbfb. runx1 binds DNA as a monomer and through the Runt domain. DNA-binding is increased by heterodimerization. In terms of tissue distribution, shows a complex and dynamic expression pattern. In stage 14-24 embryos, expressed in a subset of neuroblasts in the lateral stripe of the neural plate. In late neurula stages, expression begins in the olfactory placodes. Also expressed in structures that play a role in blood formation: at stage 14, expressed on the anterior ventral side of the embryo in the anterior endomesoderm. As the embryo elongates, expression shifts gradually to a V-shaped expression pattern in the presumptive ventral blood island.

It is found in the nucleus. Its function is as follows. Involved in primitive hematopoiesis in the embryo. This is Runt-related transcription factor 1 from Xenopus laevis (African clawed frog).